An 895-amino-acid polypeptide reads, in one-letter code: DNA mismatch repair protein MutS (895 aa).

632–639 (GPNMAGKS) is an ATP binding site. The tract at residues 824–849 (VTQDKKQVKKQTKNNHSARSGSRQQQ) is disordered. Polar residues predominate over residues 837 to 849 (NNHSARSGSRQQQ).

The protein belongs to the DNA mismatch repair MutS family.

This protein is involved in the repair of mismatches in DNA. It is possible that it carries out the mismatch recognition step. This protein has a weak ATPase activity. This Desulforapulum autotrophicum (strain ATCC 43914 / DSM 3382 / VKM B-1955 / HRM2) (Desulfobacterium autotrophicum) protein is DNA mismatch repair protein MutS.